We begin with the raw amino-acid sequence, 394 residues long: uncharacterized protein (394 aa).

The next 12 membrane-spanning stretches (helical) occupy residues Leu13–Ile33, Met35–Thr55, Thr73–Val95, Ala110–Leu130, Ile152–Leu172, Leu179–Val198, Val216–Pro236, Val241–Leu261, Val267–Leu287, Val293–Val313, Met340–Ile360, and Ile372–Ala392.

The protein resides in the membrane. This is an uncharacterized protein from Saccharomyces cerevisiae (strain ATCC 204508 / S288c) (Baker's yeast).